The primary structure comprises 55 residues: Serine protease inhibitor Kazal-type 1 (55 aa).

The 54-residue stretch at 2–55 folds into the Kazal-like domain; that stretch reads QGRDANCNYEFPGCPRNLEPVCGTDGNTYNNECLLCMENKKRDVPIRIQKDGPC. 3 disulfides stabilise this stretch: Cys-8–Cys-37, Cys-15–Cys-34, and Cys-23–Cys-55.

It is found in the secreted. Its function is as follows. Serine protease inhibitor which exhibits anti-trypsin activity. In the pancreas, protects against trypsin-catalyzed premature activation of zymogens. Functionally, in the male reproductive tract, binds to sperm heads where it modulates sperm capacitance by inhibiting calcium uptake and nitrogen oxide (NO) production. The sequence is that of Serine protease inhibitor Kazal-type 1 (SPINK1) from Monodelphis domestica (Gray short-tailed opossum).